The primary structure comprises 307 residues: Ribosomal RNA small subunit methyltransferase H (307 aa).

Residues 32-34 (GGH), Asp-52, Phe-78, Asp-99, and Gln-106 each bind S-adenosyl-L-methionine. Positions 287–307 (KEEIESNKRSHSAKLRVAEKV) are disordered.

Belongs to the methyltransferase superfamily. RsmH family.

The protein localises to the cytoplasm. The catalysed reaction is cytidine(1402) in 16S rRNA + S-adenosyl-L-methionine = N(4)-methylcytidine(1402) in 16S rRNA + S-adenosyl-L-homocysteine + H(+). Its function is as follows. Specifically methylates the N4 position of cytidine in position 1402 (C1402) of 16S rRNA. This is Ribosomal RNA small subunit methyltransferase H from Caldicellulosiruptor bescii (strain ATCC BAA-1888 / DSM 6725 / KCTC 15123 / Z-1320) (Anaerocellum thermophilum).